The primary structure comprises 386 residues: MVNLNTIPPKNGRDYYIALGLEGSANKLGVGIVKHPLLPKHANSDLSYDCEAEMLSNIRDTYVTPPGEGFLPRDTARHHRNWCIRLIKQALAEADIKSPTLDIDVICFTKGPGMGAPLHSVVIAARTCSLLWDVPLVGVNHCIGHIEMGREITKAQNPVVLYVSGGNTQVIAYSEKRYRIFGETLDIAIGNCLDRFARTLKIPNEPSPGYNIEQLAKKAPHKENLVELPYTVKGMDLSMSGILASIDLLAKDLFKGNKKNKILFDKTTGEQKVTVEDLCYSLQENLFAMLVEITERAMAHVNSNQVLIVGGVGCNVRLQEMMAQMCKDRANGQVHATDNRFCIDNGVMIAQAGLLEYRMGGIVKDFSETVVTQKFRTDEVYAAWRD.

A divalent metal cation is bound by residues His141, His145, and Tyr162. Substrate-binding positions include 162–166 (YVSGG), Asp194, Gly209, Glu213, and Asn315. Position 344 (Asp344) interacts with a divalent metal cation.

It belongs to the KAE1 / TsaD family. Component of the EKC/KEOPS complex composed of at least BUD32, CGI121, GON7, KAE1 and PCC1; the whole complex dimerizes. Requires a divalent metal cation as cofactor.

It localises to the cytoplasm. Its subcellular location is the nucleus. It catalyses the reaction L-threonylcarbamoyladenylate + adenosine(37) in tRNA = N(6)-L-threonylcarbamoyladenosine(37) in tRNA + AMP + H(+). Functionally, component of the EKC/KEOPS complex that is required for the formation of a threonylcarbamoyl group on adenosine at position 37 (t(6)A37) in tRNAs that read codons beginning with adenine. The complex is probably involved in the transfer of the threonylcarbamoyl moiety of threonylcarbamoyl-AMP (TC-AMP) to the N6 group of A37. KAE1 likely plays a direct catalytic role in this reaction, but requires other protein(s) of the complex to fulfill this activity. The EKC/KEOPS complex also promotes both telomere uncapping and telomere elongation. The complex is required for efficient recruitment of transcriptional coactivators. The chain is tRNA N6-adenosine threonylcarbamoyltransferase from Saccharomyces cerevisiae (strain ATCC 204508 / S288c) (Baker's yeast).